The chain runs to 390 residues: Phosphopentomutase (390 aa).

Mn(2+) contacts are provided by aspartate 12, aspartate 285, histidine 290, aspartate 326, histidine 327, and histidine 338.

The protein belongs to the phosphopentomutase family. Mn(2+) is required as a cofactor.

Its subcellular location is the cytoplasm. It carries out the reaction 2-deoxy-alpha-D-ribose 1-phosphate = 2-deoxy-D-ribose 5-phosphate. The catalysed reaction is alpha-D-ribose 1-phosphate = D-ribose 5-phosphate. The protein operates within carbohydrate degradation; 2-deoxy-D-ribose 1-phosphate degradation; D-glyceraldehyde 3-phosphate and acetaldehyde from 2-deoxy-alpha-D-ribose 1-phosphate: step 1/2. Isomerase that catalyzes the conversion of deoxy-ribose 1-phosphate (dRib-1-P) and ribose 1-phosphate (Rib-1-P) to deoxy-ribose 5-phosphate (dRib-5-P) and ribose 5-phosphate (Rib-5-P), respectively. The chain is Phosphopentomutase from Brevibacillus brevis (strain 47 / JCM 6285 / NBRC 100599).